Reading from the N-terminus, the 123-residue chain is Small ribosomal subunit protein uS12 (123 aa).

Aspartate 89 bears the 3-methylthioaspartic acid mark. The segment at 104–123 is disordered; the sequence is TAGVKDRKQARSKYGAKRPK. Residues 113-123 show a composition bias toward basic residues; that stretch reads ARSKYGAKRPK.

The protein belongs to the universal ribosomal protein uS12 family. In terms of assembly, part of the 30S ribosomal subunit. Contacts proteins S8 and S17. May interact with IF1 in the 30S initiation complex.

In terms of biological role, with S4 and S5 plays an important role in translational accuracy. Functionally, interacts with and stabilizes bases of the 16S rRNA that are involved in tRNA selection in the A site and with the mRNA backbone. Located at the interface of the 30S and 50S subunits, it traverses the body of the 30S subunit contacting proteins on the other side and probably holding the rRNA structure together. The combined cluster of proteins S8, S12 and S17 appears to hold together the shoulder and platform of the 30S subunit. The protein is Small ribosomal subunit protein uS12 of Neisseria meningitidis serogroup C (strain 053442).